We begin with the raw amino-acid sequence, 226 residues long: NADH-ubiquinone oxidoreductase chain 6 (226 aa).

The next 5 membrane-spanning stretches (helical) occupy residues Ser2–Leu22, Ile28–Val48, Ile56–Ile76, Tyr90–Thr110, and Ile169–Thr189.

The protein belongs to the complex I subunit 6 family.

The protein localises to the mitochondrion membrane. It carries out the reaction a ubiquinone + NADH + 5 H(+)(in) = a ubiquinol + NAD(+) + 4 H(+)(out). In terms of biological role, core subunit of the mitochondrial membrane respiratory chain NADH dehydrogenase (Complex I) that is believed to belong to the minimal assembly required for catalysis. Complex I functions in the transfer of electrons from NADH to the respiratory chain. The immediate electron acceptor for the enzyme is believed to be ubiquinone. The protein is NADH-ubiquinone oxidoreductase chain 6 (nad6) of Dictyostelium citrinum (Slime mold).